Reading from the N-terminus, the 337-residue chain is Glucokinase (337 aa).

ATP is bound at residue 11–16 (ADIGGT).

The protein belongs to the bacterial glucokinase family.

Its subcellular location is the cytoplasm. The catalysed reaction is D-glucose + ATP = D-glucose 6-phosphate + ADP + H(+). The sequence is that of Glucokinase from Xylella fastidiosa (strain 9a5c).